The following is a 146-amino-acid chain: Aspartate 1-decarboxylase (146 aa).

The active-site Schiff-base intermediate with substrate; via pyruvic acid is serine 25. Residue serine 25 is modified to Pyruvic acid (Ser). Threonine 57 provides a ligand contact to substrate. The active-site Proton donor is the tyrosine 58. 73–75 (GPA) lines the substrate pocket.

The protein belongs to the PanD family. In terms of assembly, heterooctamer of four alpha and four beta subunits. Pyruvate serves as cofactor. In terms of processing, is synthesized initially as an inactive proenzyme, which is activated by self-cleavage at a specific serine bond to produce a beta-subunit with a hydroxyl group at its C-terminus and an alpha-subunit with a pyruvoyl group at its N-terminus.

It is found in the cytoplasm. It catalyses the reaction L-aspartate + H(+) = beta-alanine + CO2. It participates in cofactor biosynthesis; (R)-pantothenate biosynthesis; beta-alanine from L-aspartate: step 1/1. Functionally, catalyzes the pyruvoyl-dependent decarboxylation of aspartate to produce beta-alanine. The sequence is that of Aspartate 1-decarboxylase from Salinibacter ruber (strain DSM 13855 / M31).